Reading from the N-terminus, the 312-residue chain is Olfactory receptor 2J2 (312 aa).

Topologically, residues 1–26 (MMIKKNASSEDFFILLGFSNWPQLEV) are extracellular. A glycan (N-linked (GlcNAc...) asparagine) is linked at asparagine 6. A helical membrane pass occupies residues 27–50 (VLFVVILIFYLMTLTGNLFIIILS). Over 51–58 (YVDSHLHT) the chain is Cytoplasmic. The chain crosses the membrane as a helical span at residues 59-80 (PMYFFLSNLSFLDLCHTTSSIP). The Extracellular segment spans residues 81-101 (QLLVNLRGPEKTISYAGCMVQ). A disulfide bond links cysteine 98 and cysteine 190. The helical transmembrane segment at 102 to 121 (LYFVLALGIAECVLLVVMSY) threads the bilayer. Residues 122 to 140 (DRYVAVCRPLHYTVLMHPR) are Cytoplasmic-facing. The chain crosses the membrane as a helical span at residues 141–159 (FCHLLAAASWVIGFTISAL). The Extracellular segment spans residues 160–196 (HSSFTFWVPLCGHRLVDHFFCEVPALLRLSCVDTHAN). A helical membrane pass occupies residues 197–220 (ELTLMVMSSIFVLIPLILILTAYG). Topologically, residues 221 to 237 (AIARAVLSMQSTTGLQK) are cytoplasmic. The helical transmembrane segment at 238–260 (VFRTCGAHLMVVSLFFIPVMCMY) threads the bilayer. Residues 261-273 (LQPPSENSPDQGK) are Extracellular-facing. Residues 274–293 (FIALFYTVVTPSLNPLIYTL) form a helical membrane-spanning segment. At 294–312 (RNKHVKGAAKRLLGWEWGK) the chain is on the cytoplasmic side.

This sequence belongs to the G-protein coupled receptor 1 family.

It is found in the cell membrane. Odorant receptor. The protein is Olfactory receptor 2J2 (OR2J2) of Homo sapiens (Human).